The primary structure comprises 100 residues: Small ribosomal subunit protein bS20 (100 aa).

This sequence belongs to the bacterial ribosomal protein bS20 family.

Its function is as follows. Binds directly to 16S ribosomal RNA. The chain is Small ribosomal subunit protein bS20 from Synechococcus sp. (strain JA-3-3Ab) (Cyanobacteria bacterium Yellowstone A-Prime).